Consider the following 474-residue polypeptide: 3-isopropylmalate dehydratase large subunit (474 aa).

Positions 355, 415, and 418 each coordinate [4Fe-4S] cluster.

This sequence belongs to the aconitase/IPM isomerase family. LeuC type 1 subfamily. As to quaternary structure, heterodimer of LeuC and LeuD. Requires [4Fe-4S] cluster as cofactor.

The catalysed reaction is (2R,3S)-3-isopropylmalate = (2S)-2-isopropylmalate. The protein operates within amino-acid biosynthesis; L-leucine biosynthesis; L-leucine from 3-methyl-2-oxobutanoate: step 2/4. Catalyzes the isomerization between 2-isopropylmalate and 3-isopropylmalate, via the formation of 2-isopropylmaleate. The chain is 3-isopropylmalate dehydratase large subunit from Shewanella oneidensis (strain ATCC 700550 / JCM 31522 / CIP 106686 / LMG 19005 / NCIMB 14063 / MR-1).